The chain runs to 200 residues: NADH-quinone oxidoreductase subunit C (200 aa).

Belongs to the complex I 30 kDa subunit family. As to quaternary structure, NDH-1 is composed of 14 different subunits. Subunits NuoB, C, D, E, F, and G constitute the peripheral sector of the complex.

The protein localises to the cell inner membrane. The catalysed reaction is a quinone + NADH + 5 H(+)(in) = a quinol + NAD(+) + 4 H(+)(out). In terms of biological role, NDH-1 shuttles electrons from NADH, via FMN and iron-sulfur (Fe-S) centers, to quinones in the respiratory chain. The immediate electron acceptor for the enzyme in this species is believed to be ubiquinone. Couples the redox reaction to proton translocation (for every two electrons transferred, four hydrogen ions are translocated across the cytoplasmic membrane), and thus conserves the redox energy in a proton gradient. In Rhizobium rhizogenes (strain K84 / ATCC BAA-868) (Agrobacterium radiobacter), this protein is NADH-quinone oxidoreductase subunit C.